We begin with the raw amino-acid sequence, 641 residues long: Forkhead box protein P4 (641 aa).

Disordered stretches follow at residues 1 to 43 (MMVE…NGEL) and 239 to 264 (SFPTTKVSPPTMHPSLSNGQNTRRES). 2 stretches are compositionally biased toward polar residues: residues 8 to 27 (IRSTPTSQNGVGSLPNQSDS) and 239 to 259 (SFPTTKVSPPTMHPSLSNGQN). The C2H2-type zinc finger occupies 278–303 (GECRWPGCEALCEDMGQFIKHLNTEH). The leucine-zipper stretch occupies residues 320–341 (VQQLEIQLAKESERLQAMMTHL). The interval 354–358 (PLNLV) is ctbp1-binding. The fork-head DNA-binding region spans 436–526 (RPPFTYASLI…PPKMTGSPTL (91 aa)). The interval 563–641 (SSGSVLHGGH…ESESPMEDLP (79 aa)) is disordered. Residues 576–599 (TSTGEPGNSNGSSPRLSPQYSQSI) show a composition bias toward polar residues. Residues 600–611 (HVKEEPAEDDVR) are compositionally biased toward basic and acidic residues. Acidic residues predominate over residues 629 to 641 (RDLESESPMEDLP).

In terms of assembly, dimerization is required for DNA-binding. First expressed in the anterior neural field of stage 15 embryos. At stage 18, localized in three domains of the brain (rostral forebrain, midbrain and hindbrain) and in the eye anlage. Cerebral and retinal expression persists at later stages with additional expression in the branchial arches, at the base of the hatching gland, and in the pancreas.

Its subcellular location is the nucleus. Its function is as follows. Transcriptional repressor. The polypeptide is Forkhead box protein P4 (Xenopus laevis (African clawed frog)).